A 231-amino-acid chain; its full sequence is NADH-ubiquinone oxidoreductase chain 4 (231 aa).

The next 6 membrane-spanning stretches (helical) occupy residues proline 1 to isoleucine 21, methionine 34 to leucine 54, isoleucine 63 to glycine 85, alanine 89 to tyrosine 111, isoleucine 128 to proline 148, and threonine 169 to leucine 189.

The protein belongs to the complex I subunit 4 family.

The protein localises to the mitochondrion membrane. The enzyme catalyses a ubiquinone + NADH + 5 H(+)(in) = a ubiquinol + NAD(+) + 4 H(+)(out). Functionally, core subunit of the mitochondrial membrane respiratory chain NADH dehydrogenase (Complex I) that is believed to belong to the minimal assembly required for catalysis. Complex I functions in the transfer of electrons from NADH to the respiratory chain. The immediate electron acceptor for the enzyme is believed to be ubiquinone. This is NADH-ubiquinone oxidoreductase chain 4 (MT-ND4) from Lachesis muta muta (Bushmaster).